Here is a 110-residue protein sequence, read N- to C-terminus: Light-harvesting complex-like protein OHP1, chloroplastic (110 aa).

A chloroplast-targeting transit peptide spans 1–41 (MSSSPLSSSLFHPLSTLSTHCHGRRQNLCFNRKQQPFVVRA). Residues 42 to 74 (AKLPEGVIVPKAQPKSQPAFLGFTQTAEIWNSR) lie on the Stromal side of the membrane. Residues 75-95 (ACMIGLIGTFIVELILNKGIL) form a helical membrane-spanning segment. The Lumenal segment spans residues 96–110 (ELIGVEIGKGLDLPL).

This sequence belongs to the ELIP/psbS family. In terms of assembly, may bind chlorophyll and form dimers in the thylakoid membrane. Component of a high molecular weight complex containing OHP1, OHP2 and HCF244, and PSII core proteins D1/D2, HCF136 and HCF173. Interacts with HCF244. Forms a trimeric complex with OHP2 and HCF244 that mutually stabilizes each subunit. As to expression, mostly expressed in cotyledons and shoot apices.

It localises to the plastid. The protein localises to the chloroplast thylakoid membrane. Functionally, may play a photoprotective role in the thylakoid membrane in response to light stress. Involved in photosystems I (PSI) and II (PSII) core proteins function. Forms a trimeric complex with OHP2 and HCF244 that is required to promote PSII core subunit assembly. The trimeric complex forms a transient PSII reaction center-like complex with PsbA, PsbD, PsbE, PsbF and PsbI subunits in thylakoids for early assembly of PSII as well as PSII repair. The trimeric complex is required for the recruitment of ribosomes to the psbA mRNA during PSII biogenesis and repair. Forms a heterodimer with OHP1 that binds chlorophylls and carotenoids, and that may function in the delivery of pigments to the PsbA subunit of PSII. The sequence is that of Light-harvesting complex-like protein OHP1, chloroplastic from Arabidopsis thaliana (Mouse-ear cress).